The primary structure comprises 185 residues: Elongation factor P (185 aa).

This sequence belongs to the elongation factor P family.

The protein resides in the cytoplasm. Its pathway is protein biosynthesis; polypeptide chain elongation. Its function is as follows. Involved in peptide bond synthesis. Stimulates efficient translation and peptide-bond synthesis on native or reconstituted 70S ribosomes in vitro. Probably functions indirectly by altering the affinity of the ribosome for aminoacyl-tRNA, thus increasing their reactivity as acceptors for peptidyl transferase. The sequence is that of Elongation factor P from Methylobacillus flagellatus (strain ATCC 51484 / DSM 6875 / VKM B-1610 / KT).